Here is a 294-residue protein sequence, read N- to C-terminus: Nucleotide-binding protein CA_C0511 (294 aa).

8 to 15 (GLSGAGKT) lines the ATP pocket. A GTP-binding site is contributed by 59–62 (DIRG).

It belongs to the RapZ-like family.

Displays ATPase and GTPase activities. This is Nucleotide-binding protein CA_C0511 from Clostridium acetobutylicum (strain ATCC 824 / DSM 792 / JCM 1419 / IAM 19013 / LMG 5710 / NBRC 13948 / NRRL B-527 / VKM B-1787 / 2291 / W).